The chain runs to 157 residues: S-ribosylhomocysteine lyase (157 aa).

Residues His-54, His-58, and Cys-126 each coordinate Fe cation.

The protein belongs to the LuxS family. In terms of assembly, homodimer. Requires Fe cation as cofactor.

It catalyses the reaction S-(5-deoxy-D-ribos-5-yl)-L-homocysteine = (S)-4,5-dihydroxypentane-2,3-dione + L-homocysteine. Its function is as follows. Involved in the synthesis of autoinducer 2 (AI-2) which is secreted by bacteria and is used to communicate both the cell density and the metabolic potential of the environment. The regulation of gene expression in response to changes in cell density is called quorum sensing. Catalyzes the transformation of S-ribosylhomocysteine (RHC) to homocysteine (HC) and 4,5-dihydroxy-2,3-pentadione (DPD). This Bacillus velezensis (strain DSM 23117 / BGSC 10A6 / LMG 26770 / FZB42) (Bacillus amyloliquefaciens subsp. plantarum) protein is S-ribosylhomocysteine lyase.